A 394-amino-acid chain; its full sequence is Ribulose bisphosphate carboxylase large chain (394 aa).

K5 is subject to N6,N6,N6-trimethyllysine. The substrate site is built by N114 and T164. K166 functions as the Proton acceptor in the catalytic mechanism. Position 168 (K168) interacts with substrate. Residues K192, D194, and E195 each contribute to the Mg(2+) site. The residue at position 192 (K192) is an N6-carboxylysine. Catalysis depends on H285, which acts as the Proton acceptor. The substrate site is built by R286, H318, and S370.

The protein belongs to the RuBisCO large chain family. Type I subfamily. Heterohexadecamer of 8 large chains and 8 small chains. Mg(2+) serves as cofactor.

It is found in the plastid. The protein resides in the chloroplast. The enzyme catalyses 2 (2R)-3-phosphoglycerate + 2 H(+) = D-ribulose 1,5-bisphosphate + CO2 + H2O. It carries out the reaction D-ribulose 1,5-bisphosphate + O2 = 2-phosphoglycolate + (2R)-3-phosphoglycerate + 2 H(+). Its function is as follows. RuBisCO catalyzes two reactions: the carboxylation of D-ribulose 1,5-bisphosphate, the primary event in carbon dioxide fixation, as well as the oxidative fragmentation of the pentose substrate in the photorespiration process. Both reactions occur simultaneously and in competition at the same active site. This chain is Ribulose bisphosphate carboxylase large chain (rbcL), found in Cabomba caroliniana (Carolina fanwort).